Here is a 303-residue protein sequence, read N- to C-terminus: Ferrochelatase (303 aa).

Fe cation-binding residues include histidine 185 and glutamate 262.

Belongs to the ferrochelatase family.

The protein localises to the cytoplasm. The enzyme catalyses heme b + 2 H(+) = protoporphyrin IX + Fe(2+). It functions in the pathway porphyrin-containing compound metabolism; protoheme biosynthesis; protoheme from protoporphyrin-IX: step 1/1. Its function is as follows. Catalyzes the ferrous insertion into protoporphyrin IX. This Campylobacter jejuni subsp. doylei (strain ATCC BAA-1458 / RM4099 / 269.97) protein is Ferrochelatase.